A 231-amino-acid chain; its full sequence is Lipoprotein-releasing system ATP-binding protein LolD (231 aa).

The region spanning 6-230 is the ABC transporter domain; the sequence is LSCKNVSKKY…DGELELVINS (225 aa). 42-49 contacts ATP; the sequence is GLSGSGKT.

It belongs to the ABC transporter superfamily. Lipoprotein translocase (TC 3.A.1.125) family. The complex is composed of two ATP-binding proteins (LolD) and two transmembrane proteins (LolC and LolE).

It localises to the cell inner membrane. Functionally, part of the ABC transporter complex LolCDE involved in the translocation of mature outer membrane-directed lipoproteins, from the inner membrane to the periplasmic chaperone, LolA. Responsible for the formation of the LolA-lipoprotein complex in an ATP-dependent manner. The protein is Lipoprotein-releasing system ATP-binding protein LolD of Francisella tularensis subsp. holarctica (strain OSU18).